The following is a 115-amino-acid chain: UPF0738 protein SAV1005 (115 aa).

This sequence belongs to the UPF0738 family.

The sequence is that of UPF0738 protein SAV1005 from Staphylococcus aureus (strain Mu50 / ATCC 700699).